The sequence spans 137 residues: Holo-[acyl-carrier-protein] synthase (137 aa).

Residues Asp8 and Glu57 each coordinate Mg(2+).

This sequence belongs to the P-Pant transferase superfamily. AcpS family. Mg(2+) is required as a cofactor.

The protein localises to the cytoplasm. It carries out the reaction apo-[ACP] + CoA = holo-[ACP] + adenosine 3',5'-bisphosphate + H(+). Functionally, transfers the 4'-phosphopantetheine moiety from coenzyme A to a Ser of acyl-carrier-protein. This Cereibacter sphaeroides (strain ATCC 17023 / DSM 158 / JCM 6121 / CCUG 31486 / LMG 2827 / NBRC 12203 / NCIMB 8253 / ATH 2.4.1.) (Rhodobacter sphaeroides) protein is Holo-[acyl-carrier-protein] synthase.